A 270-amino-acid polypeptide reads, in one-letter code: Protein-ADP-ribose hydrolase (270 aa).

In terms of domain architecture, Macro spans 73-267 (VSVKDCQKTN…LYDTYLQKEN (195 aa)). Positions 92, 93, and 106 each coordinate ADP-D-ribose. 3 residues coordinate Zn(2+): Cys-112, His-117, and Cys-119. ADP-D-ribose is bound by residues Cys-119, Ile-120, Asp-121, Ser-212, Thr-213, Gly-214, Glu-215, and Phe-216.

Belongs to the MacroD-type family. Zn-Macro subfamily. The cofactor is Zn(2+).

It carries out the reaction 4-O-(ADP-D-ribosyl)-L-aspartyl-[protein] + H2O = L-aspartyl-[protein] + ADP-D-ribose + H(+). Its function is as follows. ADP-ribosylhydrolase that specifically reverses the SirTM-mediated mono-ADP-ribosylation at an asparatate residue of GcvH-L, by releasing ADP-ribose from the target protein. May play a role in the regulation of the response to host-induced oxidative stress. The chain is Protein-ADP-ribose hydrolase from Streptococcus pyogenes serotype M18 (strain MGAS8232).